A 104-amino-acid polypeptide reads, in one-letter code: Pyrimidine/purine nucleoside phosphorylase (104 aa).

Belongs to the nucleoside phosphorylase PpnP family.

The catalysed reaction is a purine D-ribonucleoside + phosphate = a purine nucleobase + alpha-D-ribose 1-phosphate. It catalyses the reaction adenosine + phosphate = alpha-D-ribose 1-phosphate + adenine. It carries out the reaction cytidine + phosphate = cytosine + alpha-D-ribose 1-phosphate. The enzyme catalyses guanosine + phosphate = alpha-D-ribose 1-phosphate + guanine. The catalysed reaction is inosine + phosphate = alpha-D-ribose 1-phosphate + hypoxanthine. It catalyses the reaction thymidine + phosphate = 2-deoxy-alpha-D-ribose 1-phosphate + thymine. It carries out the reaction uridine + phosphate = alpha-D-ribose 1-phosphate + uracil. The enzyme catalyses xanthosine + phosphate = alpha-D-ribose 1-phosphate + xanthine. Its function is as follows. Catalyzes the phosphorolysis of diverse nucleosides, yielding D-ribose 1-phosphate and the respective free bases. Can use uridine, adenosine, guanosine, cytidine, thymidine, inosine and xanthosine as substrates. Also catalyzes the reverse reactions. The sequence is that of Pyrimidine/purine nucleoside phosphorylase from Geotalea uraniireducens (strain Rf4) (Geobacter uraniireducens).